A 163-amino-acid polypeptide reads, in one-letter code: Lysosomal enzyme trafficking factor (163 aa).

The next 2 membrane-spanning stretches (helical) occupy residues methionine 40–phenylalanine 60 and leucine 98–leucine 118.

Belongs to the LYSET family. In terms of assembly, interacts with GNPTAB; this interaction is important for proper localization of GNPTAB in Golgi stacks. Interacts with MBTPS1.

Its subcellular location is the golgi apparatus membrane. Its function is as follows. Required for mannose-6-phosphate-dependent trafficking of lysosomal enzymes. LYSET bridges GlcNAc-1-phosphate transferase (GNPTAB), to the membrane-bound transcription factor site-1 protease (MBTPS1), thus allowing proteolytic activation of the GNPTAB. GNPTAB is involved in the regulation of M6P-dependent Golgi-to-lysosome trafficking of lysosomal enzymes. LYSET is thus an essential factor for maturation and delivery of lysosomal hydrolases. Plays an essential function for cells that depend on lysosomal catabolism to generate nutrients. The sequence is that of Lysosomal enzyme trafficking factor (Lyset) from Mus musculus (Mouse).